We begin with the raw amino-acid sequence, 536 residues long: Lysosomal acid glucosylceramidase (536 aa).

An N-terminal signal peptide occupies residues 1 to 39 (MEFSSPSREECPKPLSRVSIMAGSLTGLLLLQAVSWASG). 2 disulfide bridges follow: cysteine 43–cysteine 55 and cysteine 57–cysteine 62. Asparagine 58, asparagine 98, and asparagine 185 each carry an N-linked (GlcNAc...) asparagine glycan. The Proton donor role is filled by glutamate 274. Asparagine 309 carries N-linked (GlcNAc...) asparagine glycosylation. The active-site Nucleophile is glutamate 379. Asparagine 501 is a glycosylation site (N-linked (GlcNAc...) asparagine).

It belongs to the glycosyl hydrolase 30 family. Interacts with saposin-C. Interacts with SCARB2. Interacts with TCP1. May interacts with SNCA; this interaction may inhibit the glucosylceramidase activity. Interacts with GRN; this interaction prevents aggregation of GBA1-SCARB2 complex via interaction with HSPA1A upon stress.

Its subcellular location is the lysosome membrane. The enzyme catalyses a beta-D-glucosyl-(1&lt;-&gt;1')-N-acylsphing-4-enine + H2O = an N-acylsphing-4-enine + D-glucose. It catalyses the reaction a beta-D-galactosyl-(1&lt;-&gt;1')-N-acylsphing-4-enine + H2O = an N-acylsphing-4-enine + D-galactose. The catalysed reaction is cholesteryl 3-beta-D-glucoside + H2O = cholesterol + D-glucose. It carries out the reaction a beta-D-glucosyl-(1&lt;-&gt;1')-N-acylsphing-4-enine + cholesterol = cholesteryl 3-beta-D-glucoside + an N-acylsphing-4-enine. The enzyme catalyses beta-D-glucosyl-N-(9Z-octadecenoyl)-sphing-4E-enine + cholesterol = N-(9Z-octadecenoyl)-sphing-4-enine + cholesteryl 3-beta-D-glucoside. It catalyses the reaction beta-D-glucosyl-(1&lt;-&gt;1')-N-hexadecanoylsphing-4-enine + cholesterol = cholesteryl 3-beta-D-glucoside + N-hexadecanoylsphing-4-enine. The catalysed reaction is beta-D-glucosyl-N-octanoylsphing-4E-enine + cholesterol = N-octanoylsphing-4-enine + cholesteryl 3-beta-D-glucoside. It carries out the reaction beta-D-glucosyl-N-dodecanoylsphing-4-enine + cholesterol = N-dodecanoylsphing-4-enine + cholesteryl 3-beta-D-glucoside. The enzyme catalyses beta-D-glucosyl-(1&lt;-&gt;1)-N-octadecanoylsphing-4-enine + cholesterol = N-octadecanoylsphing-4-enine + cholesteryl 3-beta-D-glucoside. It catalyses the reaction beta-D-glucosyl-(1&lt;-&gt;1')-N-(15Z-tetracosenoyl)-sphing-4-enine + cholesterol = N-(15Z-tetracosenoyl)-sphing-4-enine + cholesteryl 3-beta-D-glucoside. The catalysed reaction is a beta-D-galactosyl-(1&lt;-&gt;1')-N-acylsphing-4-enine + cholesterol = cholesteryl 3-beta-D-galactoside + an N-acylsphing-4-enine. It carries out the reaction 1-(beta-D-galactosyl)-N-dodecanoylsphing-4-enine + cholesterol = cholesteryl 3-beta-D-galactoside + N-dodecanoylsphing-4-enine. The enzyme catalyses a beta-D-xylosyl-(1&lt;-&gt;1')-N-acylsphing-4-enine + cholesterol = cholesteryl 3-beta-D-xyloside + an N-acylsphing-4-enine. It catalyses the reaction beta-D-xylosyl-(1&lt;-&gt;1')-N-(9Z-octadecenoyl)-sphing-4-enine + cholesterol = cholesteryl 3-beta-D-xyloside + N-(9Z-octadecenoyl)-sphing-4-enine. It participates in steroid metabolism; cholesterol metabolism. Its pathway is sphingolipid metabolism. Synergistically activated by saposin-A and saposin-C, two saposin peptides produced by proteolytic processing of prosaposin/PSAP. Saposin-C activates GBA1 through its recruitment to membranes. The membrane structure and composition in anionic phospholipids are also important for the activation. Activated by PKC in the salvage pathway of ceramide formation. Inhibited by conduritol B epoxide/CBE. Glucosylceramidase that catalyzes, within the lysosomal compartment, the hydrolysis of glucosylceramides/GlcCers (such as beta-D-glucosyl-(1&lt;-&gt;1')-N-acylsphing-4-enine) into free ceramides (such as N-acylsphing-4-enine) and glucose. Plays a central role in the degradation of complex lipids and the turnover of cellular membranes. Through the production of ceramides, participates in the PKC-activated salvage pathway of ceramide formation. Catalyzes the glucosylation of cholesterol, through a transglucosylation reaction where glucose is transferred from GlcCer to cholesterol. GlcCer containing mono-unsaturated fatty acids (such as beta-D-glucosyl-N-(9Z-octadecenoyl)-sphing-4-enine) are preferred as glucose donors for cholesterol glucosylation when compared with GlcCer containing same chain length of saturated fatty acids (such as beta-D-glucosyl-N-octadecanoyl-sphing-4-enine). Under specific conditions, may alternatively catalyze the reverse reaction, transferring glucose from cholesteryl 3-beta-D-glucoside to ceramide. Can also hydrolyze cholesteryl 3-beta-D-glucoside producing glucose and cholesterol. Catalyzes the hydrolysis of galactosylceramides/GalCers (such as beta-D-galactosyl-(1&lt;-&gt;1')-N-acylsphing-4-enine), as well as the transfer of galactose between GalCers and cholesterol in vitro, but with lower activity than with GlcCers. Contrary to GlcCer and GalCer, xylosylceramide/XylCer (such as beta-D-xyosyl-(1&lt;-&gt;1')-N-acylsphing-4-enine) is not a good substrate for hydrolysis, however it is a good xylose donor for transxylosylation activity to form cholesteryl 3-beta-D-xyloside. This chain is Lysosomal acid glucosylceramidase, found in Homo sapiens (Human).